The primary structure comprises 609 residues: UvrABC system protein C (609 aa).

Residues 16 to 94 (SSAGVYRMYD…IKQYMPKYNV (79 aa)) enclose the GIY-YIG domain. The UVR domain maps to 203–238 (QQVISTLVAKMEQAAQQQEYEQAARFRDQIMALRKV).

This sequence belongs to the UvrC family. In terms of assembly, interacts with UvrB in an incision complex.

Its subcellular location is the cytoplasm. Functionally, the UvrABC repair system catalyzes the recognition and processing of DNA lesions. UvrC both incises the 5' and 3' sides of the lesion. The N-terminal half is responsible for the 3' incision and the C-terminal half is responsible for the 5' incision. This chain is UvrABC system protein C, found in Shewanella putrefaciens (strain CN-32 / ATCC BAA-453).